Here is a 355-residue protein sequence, read N- to C-terminus: S-adenosylmethionine:tRNA ribosyltransferase-isomerase (355 aa).

The protein belongs to the QueA family. As to quaternary structure, monomer.

The protein localises to the cytoplasm. It carries out the reaction 7-aminomethyl-7-carbaguanosine(34) in tRNA + S-adenosyl-L-methionine = epoxyqueuosine(34) in tRNA + adenine + L-methionine + 2 H(+). It participates in tRNA modification; tRNA-queuosine biosynthesis. Transfers and isomerizes the ribose moiety from AdoMet to the 7-aminomethyl group of 7-deazaguanine (preQ1-tRNA) to give epoxyqueuosine (oQ-tRNA). This chain is S-adenosylmethionine:tRNA ribosyltransferase-isomerase, found in Burkholderia orbicola (strain MC0-3).